Here is a 429-residue protein sequence, read N- to C-terminus: Glucose-6-phosphate isomerase (429 aa).

The active-site Proton donor is E282. Active-site residues include H303 and K418.

This sequence belongs to the GPI family.

The protein localises to the cytoplasm. It catalyses the reaction alpha-D-glucose 6-phosphate = beta-D-fructose 6-phosphate. The protein operates within carbohydrate biosynthesis; gluconeogenesis. It functions in the pathway carbohydrate degradation; glycolysis; D-glyceraldehyde 3-phosphate and glycerone phosphate from D-glucose: step 2/4. In terms of biological role, catalyzes the reversible isomerization of glucose-6-phosphate to fructose-6-phosphate. The chain is Glucose-6-phosphate isomerase from Mesomycoplasma hyopneumoniae (strain 232) (Mycoplasma hyopneumoniae).